The sequence spans 266 residues: N-formylglutamate deformylase (266 aa).

Belongs to the N-formylglutamate deformylase family. Monomer.

It catalyses the reaction N-formyl-L-glutamate + H2O = formate + L-glutamate. It functions in the pathway amino-acid degradation; L-histidine degradation into L-glutamate; L-glutamate from N-formimidoyl-L-glutamate (deiminase route): step 2/2. Functionally, catalyzes the hydrolysis of N-formyl-L-glutamate to formate and L-glutamate. Shows weak activity with N-formyl-L-glutamine. The sequence is that of N-formylglutamate deformylase from Pseudomonas aeruginosa (strain ATCC 15692 / DSM 22644 / CIP 104116 / JCM 14847 / LMG 12228 / 1C / PRS 101 / PAO1).